The following is a 566-amino-acid chain: Cytokine-like nuclear factor N-PAC (566 aa).

The 62-residue stretch at 9–70 (VNDLVWAKMK…ETQIKPYLQF (62 aa)) folds into the PWWP domain. Disordered stretches follow at residues 127-147 (VASG…NTTT) and 206-234 (MLDD…SSLD). The segment at 274-566 (RNIKASQLKF…ASAVYVRARF (293 aa)) is dehydrogenase domain. NAD(+)-binding positions include 284–298 (GFLG…IVKN) and Lys-518.

Belongs to the HIBADH-related family. NP60 subfamily. In terms of assembly, binds to mononucleosomes. Interacts with male-specific lethal (MSL) histone acetyltransferase complex at least composed of mof, msl-1, msl-2 and msl-3.

Its subcellular location is the chromosome. In terms of biological role, may have oxidoreductase activity. The protein is Cytokine-like nuclear factor N-PAC of Anopheles gambiae (African malaria mosquito).